The chain runs to 396 residues: Elongation factor Tu 1 (396 aa).

The 197-residue stretch at 10 to 206 folds into the tr-type G domain; that stretch reads KPHINVGTIG…AMDAHIPQPE (197 aa). Positions 19-26 are G1; sequence GHVDHGKT. Position 19 to 26 (19 to 26) interacts with GTP; that stretch reads GHVDHGKT. Threonine 26 lines the Mg(2+) pocket. Positions 60 to 64 are G2; it reads GITIA. A G3 region spans residues 81-84; the sequence is DCPG. GTP is bound by residues 81–85 and 136–139; these read DCPGH and NKAD. The tract at residues 136-139 is G4; sequence NKAD. The tract at residues 174 to 176 is G5; the sequence is SAL.

This sequence belongs to the TRAFAC class translation factor GTPase superfamily. Classic translation factor GTPase family. EF-Tu/EF-1A subfamily. As to quaternary structure, monomer.

It is found in the cytoplasm. The enzyme catalyses GTP + H2O = GDP + phosphate + H(+). Its function is as follows. GTP hydrolase that promotes the GTP-dependent binding of aminoacyl-tRNA to the A-site of ribosomes during protein biosynthesis. This chain is Elongation factor Tu 1, found in Halorhodospira halophila (strain DSM 244 / SL1) (Ectothiorhodospira halophila (strain DSM 244 / SL1)).